The primary structure comprises 151 residues: Lipoprotein signal peptidase (151 aa).

Helical transmembrane passes span 3–23 (LYII…GWIV), 59–79 (WFFY…FYTS), and 85–107 (LYRI…RLHL). Residues Asp-112 and Asp-128 contribute to the active site. A helical membrane pass occupies residues 123–143 (IFNVADTALTCGVICVFIAIL).

The protein belongs to the peptidase A8 family.

Its subcellular location is the cell membrane. It carries out the reaction Release of signal peptides from bacterial membrane prolipoproteins. Hydrolyzes -Xaa-Yaa-Zaa-|-(S,diacylglyceryl)Cys-, in which Xaa is hydrophobic (preferably Leu), and Yaa (Ala or Ser) and Zaa (Gly or Ala) have small, neutral side chains.. It participates in protein modification; lipoprotein biosynthesis (signal peptide cleavage). This protein specifically catalyzes the removal of signal peptides from prolipoproteins. This is Lipoprotein signal peptidase from Latilactobacillus sakei subsp. sakei (strain 23K) (Lactobacillus sakei subsp. sakei).